The sequence spans 316 residues: Ferrochelatase (316 aa).

Fe cation is bound by residues histidine 188 and glutamate 269.

Belongs to the ferrochelatase family.

It localises to the cytoplasm. It carries out the reaction heme b + 2 H(+) = protoporphyrin IX + Fe(2+). The protein operates within porphyrin-containing compound metabolism; protoheme biosynthesis; protoheme from protoporphyrin-IX: step 1/1. Functionally, catalyzes the ferrous insertion into protoporphyrin IX. In Wolinella succinogenes (strain ATCC 29543 / DSM 1740 / CCUG 13145 / JCM 31913 / LMG 7466 / NCTC 11488 / FDC 602W) (Vibrio succinogenes), this protein is Ferrochelatase.